Consider the following 258-residue polypeptide: Pro-thyrotropin-releasing hormone-A (258 aa).

Residues 1 to 22 form the signal peptide; the sequence is MKSACLIILASLVVCNLTLARG. Q78 carries the post-translational modification Pyrrolidone carboxylic acid. P80 is subject to Proline amide. 2 stretches are compositionally biased toward basic and acidic residues: residues 84-98 and 107-119; these read YQEELEKRQHPGKRE and EVQKRQHPGKRED. The interval 84–124 is disordered; sequence YQEELEKRQHPGKREEDEDEDYDEVQKRQHPGKREDEFDSF. Q92 is modified (pyrrolidone carboxylic acid). P94 is modified (proline amide). Residue Q112 is modified to Pyrrolidone carboxylic acid. P114 is modified (proline amide). The residue at position 131 (Q131) is a Pyrrolidone carboxylic acid. Proline amide is present on P133. Q156 is subject to Pyrrolidone carboxylic acid. Residue P158 is modified to Proline amide. 2 disordered regions span residues 166-215 and 236-258; these read YSKR…PCDV and SRAEKRQHPGKRSAPVEDLTEQE. At Q170 the chain carries Pyrrolidone carboxylic acid. Residue P172 is modified to Proline amide. Basic and acidic residues predominate over residues 184-193; it reads GDLRELEKRQ. A Pyrrolidone carboxylic acid modification is found at Q193. P195 is modified (proline amide). Pyrrolidone carboxylic acid is present on Q242. At P244 the chain carries Proline amide.

Belongs to the TRH family.

The protein localises to the secreted. Its function is as follows. Functions as a regulator of the biosynthesis of TSH in the anterior pituitary gland and as a neurotransmitter/ neuromodulator in the central and peripheral nervous systems. This Oncorhynchus nerka (Sockeye salmon) protein is Pro-thyrotropin-releasing hormone-A (trha).